The chain runs to 268 residues: Shikimate kinase (268 aa).

Residue 70 to 80 (PSGYGLKSSSA) participates in ATP binding.

This sequence belongs to the GHMP kinase family. Archaeal shikimate kinase subfamily.

Its subcellular location is the cytoplasm. It catalyses the reaction shikimate + ATP = 3-phosphoshikimate + ADP + H(+). It functions in the pathway metabolic intermediate biosynthesis; chorismate biosynthesis; chorismate from D-erythrose 4-phosphate and phosphoenolpyruvate: step 5/7. The chain is Shikimate kinase (aroK) from Thermoplasma acidophilum (strain ATCC 25905 / DSM 1728 / JCM 9062 / NBRC 15155 / AMRC-C165).